The chain runs to 352 residues: Biotin synthase (352 aa).

The Radical SAM core domain maps to 44 to 262 (NRVQVSTLLS…LAVARILMPK (219 aa)). Residues Cys59, Cys63, and Cys66 each coordinate [4Fe-4S] cluster. Cys103, Cys134, Cys194, and Arg266 together coordinate [2Fe-2S] cluster.

This sequence belongs to the radical SAM superfamily. Biotin synthase family. In terms of assembly, homodimer. [4Fe-4S] cluster serves as cofactor. It depends on [2Fe-2S] cluster as a cofactor.

The enzyme catalyses (4R,5S)-dethiobiotin + (sulfur carrier)-SH + 2 reduced [2Fe-2S]-[ferredoxin] + 2 S-adenosyl-L-methionine = (sulfur carrier)-H + biotin + 2 5'-deoxyadenosine + 2 L-methionine + 2 oxidized [2Fe-2S]-[ferredoxin]. The protein operates within cofactor biosynthesis; biotin biosynthesis; biotin from 7,8-diaminononanoate: step 2/2. Its function is as follows. Catalyzes the conversion of dethiobiotin (DTB) to biotin by the insertion of a sulfur atom into dethiobiotin via a radical-based mechanism. The chain is Biotin synthase from Pseudomonas putida (strain ATCC 47054 / DSM 6125 / CFBP 8728 / NCIMB 11950 / KT2440).